The following is a 72-amino-acid chain: ATP synthase subunit c (72 aa).

The next 2 membrane-spanning stretches (helical) occupy residues 1–21 and 49–69; these read MSLG…GAGI and FIGV…AFIV.

It belongs to the ATPase C chain family. F-type ATPases have 2 components, F(1) - the catalytic core - and F(0) - the membrane proton channel. F(1) has five subunits: alpha(3), beta(3), gamma(1), delta(1), epsilon(1). F(0) has three main subunits: a(1), b(2) and c(10-14). The alpha and beta chains form an alternating ring which encloses part of the gamma chain. F(1) is attached to F(0) by a central stalk formed by the gamma and epsilon chains, while a peripheral stalk is formed by the delta and b chains.

It localises to the cell membrane. Its function is as follows. F(1)F(0) ATP synthase produces ATP from ADP in the presence of a proton or sodium gradient. F-type ATPases consist of two structural domains, F(1) containing the extramembraneous catalytic core and F(0) containing the membrane proton channel, linked together by a central stalk and a peripheral stalk. During catalysis, ATP synthesis in the catalytic domain of F(1) is coupled via a rotary mechanism of the central stalk subunits to proton translocation. Functionally, key component of the F(0) channel; it plays a direct role in translocation across the membrane. A homomeric c-ring of between 10-14 subunits forms the central stalk rotor element with the F(1) delta and epsilon subunits. In Bacillus anthracis (strain A0248), this protein is ATP synthase subunit c.